The primary structure comprises 275 residues: Sulfur carrier protein FdhD (275 aa).

Catalysis depends on Cys-121, which acts as the Cysteine persulfide intermediate. 258–263 (FSKPGR) lines the Mo-bis(molybdopterin guanine dinucleotide) pocket.

The protein belongs to the FdhD family.

It is found in the cytoplasm. Functionally, required for formate dehydrogenase (FDH) activity. Acts as a sulfur carrier protein that transfers sulfur from IscS to the molybdenum cofactor prior to its insertion into FDH. This chain is Sulfur carrier protein FdhD, found in Yersinia enterocolitica serotype O:8 / biotype 1B (strain NCTC 13174 / 8081).